The sequence spans 160 residues: tRNA (cytidine(34)-2'-O)-methyltransferase (160 aa).

The S-adenosyl-L-methionine site is built by leucine 78, glycine 100, isoleucine 120, and serine 128.

The protein belongs to the class IV-like SAM-binding methyltransferase superfamily. RNA methyltransferase TrmH family. TrmL subfamily. As to quaternary structure, homodimer.

It is found in the cytoplasm. It catalyses the reaction cytidine(34) in tRNA + S-adenosyl-L-methionine = 2'-O-methylcytidine(34) in tRNA + S-adenosyl-L-homocysteine + H(+). The enzyme catalyses 5-carboxymethylaminomethyluridine(34) in tRNA(Leu) + S-adenosyl-L-methionine = 5-carboxymethylaminomethyl-2'-O-methyluridine(34) in tRNA(Leu) + S-adenosyl-L-homocysteine + H(+). Functionally, methylates the ribose at the nucleotide 34 wobble position in the two leucyl isoacceptors tRNA(Leu)(CmAA) and tRNA(Leu)(cmnm5UmAA). Catalyzes the methyl transfer from S-adenosyl-L-methionine to the 2'-OH of the wobble nucleotide. This chain is tRNA (cytidine(34)-2'-O)-methyltransferase, found in Beijerinckia indica subsp. indica (strain ATCC 9039 / DSM 1715 / NCIMB 8712).